The following is a 129-amino-acid chain: Follitropin subunit beta (129 aa).

The N-terminal stretch at 1–20 is a signal peptide; that stretch reads MKSVQFCFLFCCWRAICCRS. 6 cysteine pairs are disulfide-bonded: Cys-21-Cys-69, Cys-35-Cys-84, Cys-38-Cys-122, Cys-46-Cys-100, Cys-50-Cys-102, and Cys-105-Cys-112. Asn-25 and Asn-42 each carry an N-linked (GlcNAc...) asparagine glycan.

It belongs to the glycoprotein hormones subunit beta family. In terms of assembly, heterodimer. The active follitropin is a heterodimer composed of an alpha chain/CGA shared with other hormones and a unique beta chain/FSHB shown here.

The protein localises to the secreted. Together with the alpha chain CGA constitutes follitropin, the follicle-stimulating hormone, and provides its biological specificity to the hormone heterodimer. Binds FSHR, a G protein-coupled receptor, on target cells to activate downstream signaling pathways. Follitropin is involved in follicle development and spermatogenesis in reproductive organs. The chain is Follitropin subunit beta (FSHB) from Bos taurus (Bovine).